Reading from the N-terminus, the 228-residue chain is Protein JAZ7 (228 aa).

A Tify domain is found at 101 to 136 (LSPNESTLTIFYMGEVHIFPGISPEKAELIIDLVSK). Residues 176-199 (MARRATLARFLEKRKHRLIKARPY) carry the Jas motif. The short motif at 177–184 (ARRATLAR) is the Nuclear localization signal element.

It belongs to the TIFY/JAZ family. As to quaternary structure, interacts with MYC2 (via N-terminus). JAZ7 competes with MED25 for binding to MYC2. Interacts with MTB1 (via N-terminus).

It is found in the nucleus. Functionally, repressor of jasmonate responses. The protein is Protein JAZ7 of Solanum lycopersicum (Tomato).